Here is a 253-residue protein sequence, read N- to C-terminus: Probable ATP-dependent transporter ycf16 (253 aa).

One can recognise an ABC transporter domain in the interval 6–250; the sequence is LEVTNLHAAV…EKYGYDWLKN (245 aa). Position 38-45 (38-45) interacts with ATP; it reads GKNGSGKS.

This sequence belongs to the ABC transporter superfamily. Ycf16 family.

It localises to the plastid. The protein resides in the chloroplast. The sequence is that of Probable ATP-dependent transporter ycf16 (ycf16) from Guillardia theta (Cryptophyte).